The primary structure comprises 226 residues: MNFLKSFPFYAFLCFGQYFVAVTHAATFDIVNQCTYTVWAAASPGGGRQLNSGQSWSINVNPGTVQARIWGRTNCNFDGSGRGNCETGDCNGMLECQGYGKPPNTLAEFALNQPNQDFVDISLVDGFNIPMEFSPTNGGCRNLRCTAPINEQCPAQLKTQGGCNNPCTVIKTNEFCCTNGPGSCGPTDLSRFFKARCPDAYSYPQDDPPSLFTCPPGTNYRVVFCP.

The first 25 residues, 1 to 25, serve as a signal peptide directing secretion; the sequence is MNFLKSFPFYAFLCFGQYFVAVTHA. Disulfide bonds link Cys34–Cys225, Cys75–Cys85, Cys90–Cys96, Cys140–Cys214, Cys145–Cys197, Cys153–Cys163, Cys167–Cys176, and Cys177–Cys184.

This sequence belongs to the thaumatin family.

Its subcellular location is the vacuole. This Nicotiana tabacum (Common tobacco) protein is Pathogenesis-related protein R minor form.